The chain runs to 430 residues: GTPase Obg (430 aa).

Residues 1 to 158 (MFVDQVKISL…LDVSLELKLL (158 aa)) enclose the Obg domain. Residues 118-145 (KGGRGGRGNSRFATPRNPAPDFSEKGEP) form a disordered region. The OBG-type G domain maps to 159-329 (ADVGLVGFPS…LLYAIADKLE (171 aa)). GTP contacts are provided by residues 165 to 172 (GFPSVGKS), 190 to 194 (FTTIK), 212 to 215 (DLPG), 282 to 285 (NKMD), and 310 to 312 (STI). Residues S172 and T192 each contribute to the Mg(2+) site. The region spanning 352–430 (KHTPSQDKFT…ILGGEFEFVE (79 aa)) is the OCT domain.

This sequence belongs to the TRAFAC class OBG-HflX-like GTPase superfamily. OBG GTPase family. Monomer. It depends on Mg(2+) as a cofactor.

It localises to the cytoplasm. An essential GTPase which binds GTP, GDP and possibly (p)ppGpp with moderate affinity, with high nucleotide exchange rates and a fairly low GTP hydrolysis rate. Plays a role in control of the cell cycle, stress response, ribosome biogenesis and in those bacteria that undergo differentiation, in morphogenesis control. The polypeptide is GTPase Obg (Staphylococcus aureus (strain MRSA252)).